The chain runs to 455 residues: MQKTYLLALLVSSLASVRSLADQTRLDLGGSFDSTDSADGGSDNVMIQKSEMNEVIASSELLSLHRSLVEIKSISDNEQAVGEFLIDYLDSKNFTVEMQYVDFDDDTGKTIRSPRRFNIFAYPGNNASPGIILTSHIDTVPPFIPYSLSHPASTSLKRDDILISGRGTVDDKASVACQVIAAMDHLEKHPDIPIGLLFVVSEEVGGKGMSTFSNSRLNSGTYHTIIFGEPTEGALVAGHKGMVSFTLRVHGKPAHSGYPWLGRSAVSEIIPILAEVDRLGDIPVSQGGLPSSEKYGRTTLNIGFMSGGVASNVVAEEAVAKVAVRLAAGDPEDAKDIIFRAIRNVATKNRNDATVVLSNGHERPKGDIEIIFGLEAYGVIDLDSDVDGFNVTTVNYGTDVPHWKIYGDNVKRYLYGPGTIFVAHGKNEALTVGEMEAGLEGYKKLVAKAVERERP.

The signal sequence occupies residues 1 to 21; it reads MQKTYLLALLVSSLASVRSLA. Residue Asn-93 is glycosylated (N-linked (GlcNAc...) asparagine). Asp-170 serves as a coordination point for Zn(2+). Glu-202 (proton acceptor) is an active-site residue. A Zn(2+)-binding site is contributed by Glu-203. Residue Asn-390 is glycosylated (N-linked (GlcNAc...) asparagine).

The protein belongs to the peptidase M20A family. Zn(2+) serves as cofactor.

The protein localises to the secreted. The sequence is that of Probable carboxypeptidase MCYG_07204 from Arthroderma otae (strain ATCC MYA-4605 / CBS 113480) (Microsporum canis).